The primary structure comprises 372 residues: Envelope phospholipase OPG057 (372 aa).

Residues 153-156 carry the YPPL motif; sequence YPPL. S-palmitoyl cysteine; by host attachment occurs at residues Cys185 and Cys186. The region spanning 307–334 is the PLD phosphodiesterase domain; it reads FTIQNNTKLLIVDDEYVHITSANFDGTH.

The protein belongs to the orthopoxvirus OPG057 family. In terms of assembly, interacts with protein OPG190/B5. Palmitoylated. Attachment of the palmitate moiety is essential for correct intracellular targeting and protein function.

The protein resides in the virion membrane. Its subcellular location is the host Golgi apparatus. The protein localises to the host trans-Golgi network. It is found in the host endoplasmic reticulum membrane. The catalysed reaction is a 1,2-diacyl-sn-glycero-3-phosphocholine + H2O = a 1,2-diacyl-sn-glycero-3-phosphate + choline + H(+). Functionally, major envelope protein that plays a role in the biogenesis of the viral double membrane and in egress of virus from the host cell. Produces the wrapped form of virus that is required for cell-to-cell spread. Acts as a lipase with broad specificity including phospholipase C, phospholipase A, and triacylglycerol lipase activities. In Vaccinia virus (strain Western Reserve) (VACV), this protein is Envelope phospholipase OPG057 (OPG057).